Consider the following 530-residue polypeptide: Bifunctional purine biosynthesis protein PurH (530 aa).

The region spanning 1–148 is the MGS-like domain; sequence MEQARPIRRA…KNHKDVAIVV (148 aa).

The protein belongs to the PurH family.

The enzyme catalyses (6R)-10-formyltetrahydrofolate + 5-amino-1-(5-phospho-beta-D-ribosyl)imidazole-4-carboxamide = 5-formamido-1-(5-phospho-D-ribosyl)imidazole-4-carboxamide + (6S)-5,6,7,8-tetrahydrofolate. It carries out the reaction IMP + H2O = 5-formamido-1-(5-phospho-D-ribosyl)imidazole-4-carboxamide. It participates in purine metabolism; IMP biosynthesis via de novo pathway; 5-formamido-1-(5-phospho-D-ribosyl)imidazole-4-carboxamide from 5-amino-1-(5-phospho-D-ribosyl)imidazole-4-carboxamide (10-formyl THF route): step 1/1. It functions in the pathway purine metabolism; IMP biosynthesis via de novo pathway; IMP from 5-formamido-1-(5-phospho-D-ribosyl)imidazole-4-carboxamide: step 1/1. This is Bifunctional purine biosynthesis protein PurH from Aeromonas salmonicida (strain A449).